The sequence spans 380 residues: L-lactate dehydrogenase (380 aa).

In terms of domain architecture, FMN hydroxy acid dehydrogenase spans 1–380 (MIISSASDYR…DASILVKAVA (380 aa)). Tyrosine 24 provides a ligand contact to substrate. FMN-binding residues include serine 106 and glutamine 127. Tyrosine 129 is a binding site for substrate. Position 155 (threonine 155) interacts with FMN. Arginine 164 is a binding site for substrate. Lysine 251 serves as a coordination point for FMN. Residue histidine 275 is the Proton acceptor of the active site. Arginine 278 contacts substrate. FMN is bound at residue 306-330 (DSGIRSGLDVVRMLALGAKGVLLGR).

It belongs to the FMN-dependent alpha-hydroxy acid dehydrogenase family. Homotetramer. FMN serves as cofactor.

It is found in the cell inner membrane. It catalyses the reaction (S)-lactate + A = pyruvate + AH2. Functionally, catalyzes the conversion of L-lactate to pyruvate. Is coupled to the respiratory chain. The polypeptide is L-lactate dehydrogenase (Pseudomonas syringae pv. syringae (strain B728a)).